A 108-amino-acid chain; its full sequence is uncharacterized protein (108 aa).

This is an uncharacterized protein from Saccharolobus islandicus (Sulfolobus islandicus).